Reading from the N-terminus, the 505-residue chain is 2,3-bisphosphoglycerate-independent phosphoglycerate mutase (505 aa).

Residues D11 and S61 each coordinate Mn(2+). The active-site Phosphoserine intermediate is the S61. Substrate-binding positions include H122, 152–153 (RD), R183, R189, 259–262 (RTDR), and K332. 5 residues coordinate Mn(2+): D399, H403, D440, H441, and H458.

This sequence belongs to the BPG-independent phosphoglycerate mutase family. Monomer. The cofactor is Mn(2+).

It catalyses the reaction (2R)-2-phosphoglycerate = (2R)-3-phosphoglycerate. It participates in carbohydrate degradation; glycolysis; pyruvate from D-glyceraldehyde 3-phosphate: step 3/5. Its function is as follows. Catalyzes the interconversion of 2-phosphoglycerate and 3-phosphoglycerate. This Flavobacterium psychrophilum (strain ATCC 49511 / DSM 21280 / CIP 103535 / JIP02/86) protein is 2,3-bisphosphoglycerate-independent phosphoglycerate mutase.